A 715-amino-acid polypeptide reads, in one-letter code: Phosphatidylinositol 4-phosphate 5-kinase 6 (715 aa).

Positions 1 to 13 (MSVAHADDADDYS) are enriched in basic and acidic residues. The interval 1–21 (MSVAHADDADDYSRPTGESYH) is disordered. MORN repeat units follow at residues 32–54 (YTGQ…DGCM), 55–77 (YVGD…SGAT), 78–100 (YEGD…SGDL), 101–123 (YRGS…NGDC), 124–146 (YDGE…NENH), 147–169 (YIGQ…NGNR), 170–192 (YDGS…DGSF), and 193–214 (YVGV…STSS). The tract at residues 253-306 (GASEQSSSGNRTKNSERPRRRSVDGRVSNGEMELRSNGSGYLQVDDNAESTRSS) is disordered. Residues 255 to 264 (SEQSSSGNRT) show a composition bias toward polar residues. A compositionally biased stretch (basic and acidic residues) spans 265–276 (KNSERPRRRSVD). A PIPK domain is found at 321-711 (TISKGHKNYE…RFRDFIFRVF (391 aa)). Residues 671–692 (YDISKKLEHAYKSMQYDPTSIS) form an activation loop region.

The catalysed reaction is a 1,2-diacyl-sn-glycero-3-phospho-(1D-myo-inositol 4-phosphate) + ATP = a 1,2-diacyl-sn-glycero-3-phospho-(1D-myo-inositol-4,5-bisphosphate) + ADP + H(+). This is Phosphatidylinositol 4-phosphate 5-kinase 6 (PIP5K6) from Arabidopsis thaliana (Mouse-ear cress).